Consider the following 248-residue polypeptide: Cell division protein FtsQ (248 aa).

Residues Met-1–Arg-4 lie on the Cytoplasmic side of the membrane. The helical transmembrane segment at Leu-5–Leu-25 threads the bilayer. Residues Arg-26–Arg-248 lie on the Periplasmic side of the membrane. Residues Leu-32–Tyr-101 enclose the POTRA domain.

Belongs to the FtsQ/DivIB family. FtsQ subfamily. As to quaternary structure, part of a complex composed of FtsB, FtsL and FtsQ.

Its subcellular location is the cell inner membrane. Its function is as follows. Essential cell division protein. May link together the upstream cell division proteins, which are predominantly cytoplasmic, with the downstream cell division proteins, which are predominantly periplasmic. May control correct divisome assembly. This is Cell division protein FtsQ from Allochromatium vinosum (strain ATCC 17899 / DSM 180 / NBRC 103801 / NCIMB 10441 / D) (Chromatium vinosum).